Reading from the N-terminus, the 634-residue chain is Chaperone protein dnaK2 (634 aa).

At threonine 197 the chain carries Phosphothreonine; by autocatalysis. The disordered stretch occupies residues 592 to 634; the sequence is IGSSVYQQPGNQPPAPGTPDSNESNDKGGDDDVIDADFTETKD. The span at 622 to 634 shows a compositional bias: acidic residues; that stretch reads DDVIDADFTETKD.

The protein belongs to the heat shock protein 70 family.

Functionally, acts as a chaperone. The chain is Chaperone protein dnaK2 (dnaK2) from Prochlorococcus marinus subsp. pastoris (strain CCMP1986 / NIES-2087 / MED4).